Consider the following 383-residue polypeptide: MGLRVAQTGFVVLVLLQSCAAYKLICYYTSWSQYREGDGSCFPDAIDPFLCTHVIYSFANISNNEIDTWEWNDVTLYDTLNTLKNRNPKLKTLLSVGGWNFGSQRFSKIASKTQSRRTFIKSVPPFLRTHGFDGLDLAWLYPGWRDKRHLTTLVKEMKAEFVREAQAGTEQLLLSAAVPAGKIAIDRGYDIAQISRHLDFISLLTYDFHGAWRQTVGHHSPLFRGQEDASSDRFSNADYAVSYMLRLGAPANKLVMGIPTFGKSYTLASSKTDVGAPISGPGIPGQFTKEKGILAYYEICDFLHGATTHRFRDQQVPYATKGNQWVAYDDQESVKNKARYLKNRQLAGAMVWALDLDDFRGTFCGQNLAFPLTNAIKDVLAGV.

Positions 1 to 21 (MGLRVAQTGFVVLVLLQSCAA) are cleaved as a signal peptide. The 362-residue stretch at 22–383 (YKLICYYTSW…NAIKDVLAGV (362 aa)) folds into the GH18 domain. A disulfide bridge connects residues Cys26 and Cys51. Asn60 carries an N-linked (GlcNAc...) asparagine glycan. Chitin is bound by residues 70–71 (EW), 97–100 (GGWN), Tyr141, 204–207 (LTYD), and Lys263. Cys300 and Cys364 are joined by a disulfide. The important for AKT1 activation and IL8 production stretch occupies residues 324 to 338 (QWVAYDDQESVKNKA). Trp352 serves as a coordination point for chitin.

It belongs to the glycosyl hydrolase 18 family. As to quaternary structure, monomer. In terms of tissue distribution, detected in mammary gland.

It localises to the secreted. The protein localises to the extracellular space. It is found in the cytoplasm. Its subcellular location is the perinuclear region. The protein resides in the endoplasmic reticulum. In terms of biological role, carbohydrate-binding lectin with a preference for chitin. Has no chitinase activity. May play a role in tissue remodeling and in the capacity of cells to respond to and cope with changes in their environment. Plays a role in T-helper cell type 2 (Th2) inflammatory response and IL-13-induced inflammation, regulating allergen sensitization, inflammatory cell apoptosis, dendritic cell accumulation and M2 macrophage differentiation. Facilitates invasion of pathogenic enteric bacteria into colonic mucosa and lymphoid organs. Mediates activation of AKT1 signaling pathway and subsequent IL8 production in colonic epithelial cells. Regulates antibacterial responses in lung by contributing to macrophage bacterial killing, controlling bacterial dissemination and augmenting host tolerance. Also regulates hyperoxia-induced injury, inflammation and epithelial apoptosis in lung. The sequence is that of Chitinase-3-like protein 1 (CHI3L1) from Bubalus bubalis (Domestic water buffalo).